The chain runs to 457 residues: Peptidyl-prolyl cis-trans isomerase FKBP5 (457 aa).

Met-1 carries the post-translational modification N-acetylmethionine. The tract at residues 1-26 (MTTDEGAKNSRGNPAATVAEQGEDVT) is disordered. Residue Lys-28 is modified to N6-acetyllysine. 2 PPIase FKBP-type domains span residues 50–138 (GDRV…LDFK) and 165–251 (GARV…KSFE). TPR repeat units follow at residues 268–301 (AAIV…LEME), 317–350 (LAAF…DSAN), and 351–384 (EKGL…NPQN). The interval 421–457 (AKEEANKAMSKKTSEGVTNEKLTASHAVEEEKPEGHV) is disordered. Phosphoserine is present on Ser-445. Residues 447–457 (AVEEEKPEGHV) are compositionally biased toward basic and acidic residues.

In terms of assembly, part of a heteromultimeric cytoplasmic complex with HSP90AA1, HSPA1A/HSPA1B and steroid receptors. Upon ligand binding dissociates from the complex and FKBP4 takes its place. Interacts with functionally mature heterooligomeric progesterone receptor complexes along with HSP90 and TEBP. Interacts with NR3C1. Interacts with Akt/AKT1 and PHLPP1; enhancing dephosphorylation and subsequent activation of Akt/AKT1. Interacts with IFI44L; this interaction modulates the kinase activity of IKBKB and IKBKE. Interacts with IKBKB and IKBKE. Acetylation impairs ability to promote interaction between Akt/AKT1 and PHLPP1. Deacetylation by SIRT7 promotes interaction between Akt/AKT1 and PHLPP1, leading to suppress Akt/AKT1 activation. Post-translationally, ubiquitinated, leading to degradation in a proteasome-dependent manner. Deubiquitinated by USP49, leading to stabilization.

The protein localises to the cytoplasm. Its subcellular location is the nucleus. It carries out the reaction [protein]-peptidylproline (omega=180) = [protein]-peptidylproline (omega=0). With respect to regulation, inhibited by both FK506 and rapamycin. Immunophilin protein with PPIase and co-chaperone activities. Component of unligated steroid receptors heterocomplexes through interaction with heat-shock protein 90 (HSP90). Plays a role in the intracellular trafficking of heterooligomeric forms of steroid hormone receptors maintaining the complex into the cytoplasm when unliganded. Acts as a regulator of Akt/AKT1 activity by promoting the interaction between Akt/AKT1 and PHLPP1, thereby enhancing dephosphorylation and subsequent activation of Akt/AKT1. Interacts with IKBKE and IKBKB which facilitates IKK complex assembly leading to increased IKBKE and IKBKB kinase activity, NF-kappaB activation, and IFN production. The sequence is that of Peptidyl-prolyl cis-trans isomerase FKBP5 (FKBP5) from Saimiri boliviensis boliviensis (Bolivian squirrel monkey).